A 341-amino-acid polypeptide reads, in one-letter code: Tryptophan--tRNA ligase (341 aa).

ATP is bound by residues 11–13 (RPT) and 19–20 (GH). Residues 12–20 (PTGKLHIGH) carry the 'HIGH' region motif. An L-tryptophan-binding site is contributed by Asp140. Residues 152 to 154 (GTD), Leu194, and 202 to 206 (KMSKS) each bind ATP. The 'KMSKS' region motif lies at 202-206 (KMSKS).

It belongs to the class-I aminoacyl-tRNA synthetase family. As to quaternary structure, homodimer.

It localises to the cytoplasm. It carries out the reaction tRNA(Trp) + L-tryptophan + ATP = L-tryptophyl-tRNA(Trp) + AMP + diphosphate + H(+). Catalyzes the attachment of tryptophan to tRNA(Trp). This Streptococcus pneumoniae serotype 4 (strain ATCC BAA-334 / TIGR4) protein is Tryptophan--tRNA ligase.